The sequence spans 151 residues: Small ribosomal subunit protein uS15 (151 aa).

Basic residues predominate over residues 1–16; that stretch reads MPHRSRHKKGRSRSVR. The segment at 1-21 is disordered; the sequence is MPHRSRHKKGRSRSVRPAHPT.

It belongs to the universal ribosomal protein uS15 family. In terms of assembly, part of the 30S ribosomal subunit.

This chain is Small ribosomal subunit protein uS15, found in Pyrobaculum islandicum (strain DSM 4184 / JCM 9189 / GEO3).